A 191-amino-acid polypeptide reads, in one-letter code: Adenylate kinase (191 aa).

11–16 is an ATP binding site; it reads GAGKGT. Positions 31–60 are NMP; it reads STGDILRSNVAERSPLGIKAKDYMDKGDLV. Residues T32, R37, 58-60, 86-89, and Q93 contribute to the AMP site; these read DLV and GFPR. The interval 132–138 is LID; the sequence is SRKREDD. R133 lines the ATP pocket. The AMP site is built by R135 and R146. N174 serves as a coordination point for ATP.

This sequence belongs to the adenylate kinase family. As to quaternary structure, monomer.

The protein localises to the cytoplasm. It catalyses the reaction AMP + ATP = 2 ADP. The protein operates within purine metabolism; AMP biosynthesis via salvage pathway; AMP from ADP: step 1/1. Its function is as follows. Catalyzes the reversible transfer of the terminal phosphate group between ATP and AMP. Plays an important role in cellular energy homeostasis and in adenine nucleotide metabolism. The chain is Adenylate kinase from Trichodesmium erythraeum (strain IMS101).